The sequence spans 292 residues: MNERYELNKNLAQMLKGGVIMDVTTPEEAIIAEKAGAVAVMALERVPADIRARGGVARMSDPKIIKEIKAAVSIPVMAKVRIGHFVEAQILEALGIDFIDESEVLTPADEMYHINKWDFKVPFVCGAKNLGEALRRIAEGASMIRTKGEAGTGNVVEAVRHMRMINAEIKRLTTLGEEELMAAAKELQAPYDLVKYVAQHGKLPVVNFAAGGIATPADAALMMQLGADGVFVGSGIFKSQNPEKMAAAIVKAVTYYDKPEILAEVSEGLGEAMTGIDIRQLEEKDLYATRGW.

Asp-22 contacts D-ribose 5-phosphate. Lys-79 acts as the Schiff-base intermediate with D-ribose 5-phosphate in catalysis. D-ribose 5-phosphate is bound at residue Gly-151. Residue Arg-163 coordinates D-glyceraldehyde 3-phosphate. Residues Gly-212 and 233–234 (GS) contribute to the D-ribose 5-phosphate site.

Belongs to the PdxS/SNZ family. In terms of assembly, in the presence of PdxT, forms a dodecamer of heterodimers.

It catalyses the reaction aldehydo-D-ribose 5-phosphate + D-glyceraldehyde 3-phosphate + L-glutamine = pyridoxal 5'-phosphate + L-glutamate + phosphate + 3 H2O + H(+). It participates in cofactor biosynthesis; pyridoxal 5'-phosphate biosynthesis. Catalyzes the formation of pyridoxal 5'-phosphate from ribose 5-phosphate (RBP), glyceraldehyde 3-phosphate (G3P) and ammonia. The ammonia is provided by the PdxT subunit. Can also use ribulose 5-phosphate and dihydroxyacetone phosphate as substrates, resulting from enzyme-catalyzed isomerization of RBP and G3P, respectively. This is Pyridoxal 5'-phosphate synthase subunit PdxS from Caldanaerobacter subterraneus subsp. tengcongensis (strain DSM 15242 / JCM 11007 / NBRC 100824 / MB4) (Thermoanaerobacter tengcongensis).